Here is a 295-residue protein sequence, read N- to C-terminus: Pyridoxal 5'-phosphate synthase subunit PdxS (295 aa).

D25 contributes to the D-ribose 5-phosphate binding site. The Schiff-base intermediate with D-ribose 5-phosphate role is filled by K82. G154 is a binding site for D-ribose 5-phosphate. R166 serves as a coordination point for D-glyceraldehyde 3-phosphate. D-ribose 5-phosphate is bound by residues G215 and 236 to 237; that span reads GS.

This sequence belongs to the PdxS/SNZ family. As to quaternary structure, in the presence of PdxT, forms a dodecamer of heterodimers.

It catalyses the reaction aldehydo-D-ribose 5-phosphate + D-glyceraldehyde 3-phosphate + L-glutamine = pyridoxal 5'-phosphate + L-glutamate + phosphate + 3 H2O + H(+). It functions in the pathway cofactor biosynthesis; pyridoxal 5'-phosphate biosynthesis. Its function is as follows. Catalyzes the formation of pyridoxal 5'-phosphate from ribose 5-phosphate (RBP), glyceraldehyde 3-phosphate (G3P) and ammonia. The ammonia is provided by the PdxT subunit. Can also use ribulose 5-phosphate and dihydroxyacetone phosphate as substrates, resulting from enzyme-catalyzed isomerization of RBP and G3P, respectively. The sequence is that of Pyridoxal 5'-phosphate synthase subunit PdxS from Actinobacillus pleuropneumoniae serotype 5b (strain L20).